Here is a 66-residue protein sequence, read N- to C-terminus: DNA-directed RNA polymerase subunit Rpo10 (66 aa).

4 residues coordinate Zn(2+): Cys-7, Cys-10, Cys-44, and Cys-45.

This sequence belongs to the archaeal Rpo10/eukaryotic RPB10 RNA polymerase subunit family. Part of the 13-subunit RNA polymerase complex. The cofactor is Zn(2+).

The protein localises to the cytoplasm. The catalysed reaction is RNA(n) + a ribonucleoside 5'-triphosphate = RNA(n+1) + diphosphate. Its function is as follows. DNA-dependent RNA polymerase (RNAP) catalyzes the transcription of DNA into RNA using the four ribonucleoside triphosphates as substrates. The chain is DNA-directed RNA polymerase subunit Rpo10 from Sulfolobus acidocaldarius (strain ATCC 33909 / DSM 639 / JCM 8929 / NBRC 15157 / NCIMB 11770).